The chain runs to 292 residues: UDP-N-acetylenolpyruvoylglucosamine reductase (292 aa).

Positions 21–186 (QAGGLVDYLA…ISATFELQPD (166 aa)) constitute an FAD-binding PCMH-type domain. The active site involves R165. The active-site Proton donor is the S215. The active site involves E285.

The protein belongs to the MurB family. FAD is required as a cofactor.

The protein resides in the cytoplasm. It carries out the reaction UDP-N-acetyl-alpha-D-muramate + NADP(+) = UDP-N-acetyl-3-O-(1-carboxyvinyl)-alpha-D-glucosamine + NADPH + H(+). The protein operates within cell wall biogenesis; peptidoglycan biosynthesis. Cell wall formation. The protein is UDP-N-acetylenolpyruvoylglucosamine reductase of Leuconostoc mesenteroides subsp. mesenteroides (strain ATCC 8293 / DSM 20343 / BCRC 11652 / CCM 1803 / JCM 6124 / NCDO 523 / NBRC 100496 / NCIMB 8023 / NCTC 12954 / NRRL B-1118 / 37Y).